A 101-amino-acid chain; its full sequence is RNA-binding protein Hfq (101 aa).

Positions 9–68 constitute a Sm domain; sequence DPFLNALRRERVPVSIYLVNGIKLQGQIESFDQFVILLKNTVSQMVYKHAISTVVPSRPV. Positions 63 to 101 are disordered; that stretch reads VPSRPVSHHNNNPSGGSSNYHHGSTPASQPSQPESDDAE. Positions 70–86 are enriched in low complexity; it reads HHNNNPSGGSSNYHHGS.

This sequence belongs to the Hfq family. As to quaternary structure, homohexamer.

Functionally, RNA chaperone that binds small regulatory RNA (sRNAs) and mRNAs to facilitate mRNA translational regulation in response to envelope stress, environmental stress and changes in metabolite concentrations. Also binds with high specificity to tRNAs. The chain is RNA-binding protein Hfq from Sodalis glossinidius (strain morsitans).